Here is a 561-residue protein sequence, read N- to C-terminus: Long-chain-fatty-acid--CoA ligase (561 aa).

213–224 (YTGGTTGVAKGA) is an ATP binding site.

This sequence belongs to the ATP-dependent AMP-binding enzyme family. It depends on Mg(2+) as a cofactor.

The protein resides in the membrane. It catalyses the reaction a long-chain fatty acid + ATP + CoA = a long-chain fatty acyl-CoA + AMP + diphosphate. The protein operates within lipid metabolism; fatty acid beta-oxidation. Functionally, catalyzes the esterification, concomitant with transport, of exogenous long-chain fatty acids into metabolically active CoA thioesters for subsequent degradation or incorporation into phospholipids. This chain is Long-chain-fatty-acid--CoA ligase (fadD), found in Escherichia coli O157:H7.